The primary structure comprises 652 residues: MKSLYSATSNEAAKNANVSQAEFEKRYQESIENPDEFWGREGKRIDWFKPYTKVKNTSFKRGEVSIKWFEDGELNVAYNCIDRHLAKSANKVAYYCEGDKESDEKVAITYQTLHDEVGRLANLLKRQGVKKGDRVAIYMPMIPQAVYAMLACARIGAIHSVIFGGFSAHAIADRLNDCEVKLVITADEGRRAGNTIPLKHNVDMALDNNACPTVENVIVYRYTEKDVPWFEGRDLDWAVEVENESTECPAERMNAEDPLFILYTSGSTGKPKGVVHTTGGYLVYASLTHELVFDLKPDDVYWCAADVGWITGHSYMVYGPLANGTTSILFEGVPTYPDSGRIGRVVDKFDVTILYTAPTAIRALMAKGDEATRSSKRDSLRVLGSVGEPINPEAWSWYYSEIGNSSCPIVDTWWQTETGGMMMTPRIVQGDVKPGSCTGPLYGVQPALVDAQGVLQEEQGVLVEGGLVITDSWPGQARTVYGDHERFEQTYFSTFDGMYFTGDGASRDADGHYWITGRMDDVLNVSGHRLGTAEIESALVAHPSVAEAAIVGFPHDIKGQGIYVYVSAIAGVIPDEELTKSLKLFVRQEIGPIATPDLIQWTSKGLPKTRSGKIMRRILRKIAANEHDQLGDTSTLADPSVVDDLIENRLNV.

Residues R191–N194 and T311 each bind CoA. ATP contacts are provided by residues G387–P389, D411–T416, D503, and R518. S526 is a CoA binding site. Residue R529 coordinates ATP. 3 residues coordinate Mg(2+): V540, H542, and V545. Position 587 (R587) interacts with CoA. The residue at position 613 (K613) is an N6-acetyllysine.

It belongs to the ATP-dependent AMP-binding enzyme family. It depends on Mg(2+) as a cofactor. Post-translationally, acetylated. Deacetylation by the SIR2-homolog deacetylase activates the enzyme.

It catalyses the reaction acetate + ATP + CoA = acetyl-CoA + AMP + diphosphate. Functionally, catalyzes the conversion of acetate into acetyl-CoA (AcCoA), an essential intermediate at the junction of anabolic and catabolic pathways. AcsA undergoes a two-step reaction. In the first half reaction, AcsA combines acetate with ATP to form acetyl-adenylate (AcAMP) intermediate. In the second half reaction, it can then transfer the acetyl group from AcAMP to the sulfhydryl group of CoA, forming the product AcCoA. The polypeptide is Acetyl-coenzyme A synthetase (Marinomonas sp. (strain MWYL1)).